A 500-amino-acid polypeptide reads, in one-letter code: Carnosic acid synthase (500 aa).

The helical transmembrane segment at 4–24 (LILLSLAFLASCVVAYSRRRP) threads the bilayer. C443 provides a ligand contact to heme.

Belongs to the cytochrome P450 family. It depends on heme as a cofactor. In terms of tissue distribution, mostly expressed in young leaves, particularly in glandular trichomes.

The protein localises to the membrane. The catalysed reaction is 11-hydroxyferruginol + 3 reduced [NADPH--hemoprotein reductase] + 3 O2 = carnosate + 3 oxidized [NADPH--hemoprotein reductase] + 4 H2O + 4 H(+). The enzyme catalyses miltiradiene + 2 reduced [NADPH--hemoprotein reductase] + 2 O2 = miltiradien-20-al + 2 oxidized [NADPH--hemoprotein reductase] + 3 H2O + 2 H(+). It carries out the reaction ferruginol + 3 reduced [NADPH--hemoprotein reductase] + 3 O2 = pisiferate + 3 oxidized [NADPH--hemoprotein reductase] + 4 H2O + 4 H(+). The protein operates within secondary metabolite biosynthesis; terpenoid biosynthesis. Monooxygenase involved in the biosynthesis of carnosate, a potent antioxidant labdane-related diterpene natural product. Catalyzes the oxidation of 11-hydroxyferruginol to produce carnosate. Mediates the conversion of miltiradien into miltiradien-20-al. Also involved in the production of pisiferic acid and derivative products from ferruginol. The chain is Carnosic acid synthase from Salvia fruticosa (Greek sage).